We begin with the raw amino-acid sequence, 217 residues long: Large ribosomal subunit protein eL6 (217 aa).

This sequence belongs to the eukaryotic ribosomal protein eL6 family. In terms of assembly, component of the large ribosomal subunit. May bind IPO9 with low affinity.

The protein resides in the cytoplasm. It localises to the cytosol. It is found in the rough endoplasmic reticulum. In terms of biological role, component of the large ribosomal subunit. The polypeptide is Large ribosomal subunit protein eL6 (rpl-6) (Caenorhabditis elegans).